The sequence spans 940 residues: Translation initiation factor IF-2 (940 aa).

Disordered stretches follow at residues 116–137 (PEQE…SSDT), 151–196 (EVEA…EQRS), 210–294 (AVRK…VKKV), and 318–346 (HSAP…VANR). Residues 121-137 (LESTSVAEIPESVSSDT) show a composition bias toward polar residues. The span at 159 to 180 (PEPEVEATPEPEVEDVVAEEAE) shows a compositional bias: acidic residues. The segment covering 181–193 (PAAAEPAPAPVVE) has biased composition (low complexity). The span at 213–239 (KKAEEEAEVARRKADAEKAEAAAKQKA) shows a compositional bias: basic and acidic residues. Residues 282–294 (KHNKKAGKAVKKV) are compositionally biased toward basic residues. Positions 326–337 (GGQNNNSSNSGS) are enriched in low complexity. Residues 441–610 (ARAPVVTVMG…ALQAELLELS (170 aa)) form the tr-type G domain. Residues 450–457 (GHVDHGKT) are G1. 450 to 457 (GHVDHGKT) is a binding site for GTP. The G2 stretch occupies residues 475–479 (GITQH). Positions 496-499 (DTPG) are G3. GTP contacts are provided by residues 496–500 (DTPGH) and 550–553 (NKID). Positions 550–553 (NKID) are G4. The tract at residues 586–588 (SAQ) is G5.

It belongs to the TRAFAC class translation factor GTPase superfamily. Classic translation factor GTPase family. IF-2 subfamily.

It is found in the cytoplasm. Its function is as follows. One of the essential components for the initiation of protein synthesis. Protects formylmethionyl-tRNA from spontaneous hydrolysis and promotes its binding to the 30S ribosomal subunits. Also involved in the hydrolysis of GTP during the formation of the 70S ribosomal complex. This chain is Translation initiation factor IF-2, found in Teredinibacter turnerae (strain ATCC 39867 / T7901).